The sequence spans 1135 residues: Phytochrome C (1135 aa).

The segment covering M1–C11 has biased composition (polar residues). Positions M1 to V26 are disordered. In terms of domain architecture, GAF spans N216–V399. C321 is a phytochromobilin binding site. PAS domains lie at V618–I688 and I748–S822. The Histidine kinase domain maps to Y902–Q1122.

It belongs to the phytochrome family. As to quaternary structure, homodimer. Post-translationally, contains one covalently linked phytochromobilin chromophore.

In terms of biological role, regulatory photoreceptor which exists in two forms that are reversibly interconvertible by light: the Pr form that absorbs maximally in the red region of the spectrum and the Pfr form that absorbs maximally in the far-red region. Photoconversion of Pr to Pfr induces an array of morphogenic responses, whereas reconversion of Pfr to Pr cancels the induction of those responses. Pfr controls the expression of a number of nuclear genes including those encoding the small subunit of ribulose-bisphosphate carboxylase, chlorophyll A/B binding protein, protochlorophyllide reductase, rRNA, etc. It also controls the expression of its own gene(s) in a negative feedback fashion. This chain is Phytochrome C (PHYC), found in Sorghum bicolor (Sorghum).